An 86-amino-acid chain; its full sequence is Large ribosomal subunit protein eL43 (86 aa).

Residues C38, C41, C56, and C59 each contribute to the Zn(2+) site. Residues 38-59 form a C4-type zinc finger; that stretch reads CPVCGRKAVRRISTGIWQCQKC.

This sequence belongs to the eukaryotic ribosomal protein eL43 family. As to quaternary structure, part of the 50S ribosomal subunit. It depends on Zn(2+) as a cofactor.

The polypeptide is Large ribosomal subunit protein eL43 (Thermococcus kodakarensis (strain ATCC BAA-918 / JCM 12380 / KOD1) (Pyrococcus kodakaraensis (strain KOD1))).